Consider the following 294-residue polypeptide: Bifunctional protein FolD (294 aa).

NADP(+) contacts are provided by residues 169 to 171, Thr-196, and Val-237; that span reads GRG.

Belongs to the tetrahydrofolate dehydrogenase/cyclohydrolase family. In terms of assembly, homodimer.

It carries out the reaction (6R)-5,10-methylene-5,6,7,8-tetrahydrofolate + NADP(+) = (6R)-5,10-methenyltetrahydrofolate + NADPH. It catalyses the reaction (6R)-5,10-methenyltetrahydrofolate + H2O = (6R)-10-formyltetrahydrofolate + H(+). Its pathway is one-carbon metabolism; tetrahydrofolate interconversion. Catalyzes the oxidation of 5,10-methylenetetrahydrofolate to 5,10-methenyltetrahydrofolate and then the hydrolysis of 5,10-methenyltetrahydrofolate to 10-formyltetrahydrofolate. The sequence is that of Bifunctional protein FolD from Renibacterium salmoninarum (strain ATCC 33209 / DSM 20767 / JCM 11484 / NBRC 15589 / NCIMB 2235).